Consider the following 425-residue polypeptide: Serine--tRNA ligase (425 aa).

235–237 (TAE) is a binding site for L-serine. 266-268 (RSE) lines the ATP pocket. E289 lines the L-serine pocket. An ATP-binding site is contributed by 353–356 (EISS). S389 is an L-serine binding site.

Belongs to the class-II aminoacyl-tRNA synthetase family. Type-1 seryl-tRNA synthetase subfamily. Homodimer. The tRNA molecule binds across the dimer.

It localises to the cytoplasm. It carries out the reaction tRNA(Ser) + L-serine + ATP = L-seryl-tRNA(Ser) + AMP + diphosphate + H(+). The catalysed reaction is tRNA(Sec) + L-serine + ATP = L-seryl-tRNA(Sec) + AMP + diphosphate + H(+). Its pathway is aminoacyl-tRNA biosynthesis; selenocysteinyl-tRNA(Sec) biosynthesis; L-seryl-tRNA(Sec) from L-serine and tRNA(Sec): step 1/1. In terms of biological role, catalyzes the attachment of serine to tRNA(Ser). Is also able to aminoacylate tRNA(Sec) with serine, to form the misacylated tRNA L-seryl-tRNA(Sec), which will be further converted into selenocysteinyl-tRNA(Sec). In Desulfotalea psychrophila (strain LSv54 / DSM 12343), this protein is Serine--tRNA ligase.